A 932-amino-acid polypeptide reads, in one-letter code: Transcriptional regulatory protein DagR (932 aa).

In terms of domain architecture, Sigma-54 factor interaction spans 111–343; it reads LIGYDRSLRD…LKSDIQFLCA (233 aa). ATP is bound by residues 141–148 and 210–219; these read GPSGVGKT and ADGGYLLLDE. Residues 462–567 enclose the PRD 1 domain; it reads RYGDQIEERV…KECRHYRQRI (106 aa). His497 carries the post-translational modification Phosphohistidine. Residues 572-708 enclose the PTS EIIA type-4 domain; the sequence is DCGVILIAHG…PQQENGGKVL (137 aa). His580 (tele-phosphohistidine intermediate) is an active-site residue. The 98-residue stretch at 835–932 folds into the PRD 2 domain; the sequence is LNPQRILKEM…YFYIYELLYS (98 aa). The residue at position 870 (His870) is a Phosphohistidine.

In terms of biological role, involved in the regulation of the catabolism of D-glucosaminate. The sequence is that of Transcriptional regulatory protein DagR (dgaR) from Salmonella typhimurium (strain 14028s / SGSC 2262).